A 346-amino-acid chain; its full sequence is Very-long-chain 3-oxoacyl-CoA reductase (346 aa).

A helical transmembrane segment spans residues glycine 26–valine 46. Residues valine 71, aspartate 126, aspartate 134, asparagine 153, tyrosine 220, lysine 224, isoleucine 253, and serine 255 each coordinate NADP(+). Catalysis depends on tyrosine 220, which acts as the Proton donor. The active-site Lowers pKa of active site Tyr is lysine 224.

Belongs to the short-chain dehydrogenases/reductases (SDR) family.

The protein resides in the endoplasmic reticulum membrane. It carries out the reaction a very-long-chain (3R)-3-hydroxyacyl-CoA + NADP(+) = a very-long-chain 3-oxoacyl-CoA + NADPH + H(+). Its pathway is lipid metabolism; fatty acid biosynthesis. In terms of biological role, component of the microsomal membrane bound fatty acid elongation system, which produces the 26-carbon very long-chain fatty acids (VLCFA) from palmitate. Catalyzes the reduction of the 3-ketoacyl-CoA intermediate that is formed in each cycle of fatty acid elongation. VLCFAs serve as precursors for ceramide and sphingolipids. This is Very-long-chain 3-oxoacyl-CoA reductase from Aspergillus niger (strain ATCC MYA-4892 / CBS 513.88 / FGSC A1513).